The primary structure comprises 470 residues: Aspartate-semialdehyde dehydrogenase 1 (470 aa).

Thr-145 and Lys-171 together coordinate NAD(+). Asp-243 is an active-site residue. Gly-245 is an NAD(+) binding site. Cys-277 is an active-site residue. Glu-371 lines the NAD(+) pocket.

The protein belongs to the aldehyde dehydrogenase family.

It catalyses the reaction L-aspartate 4-semialdehyde + NAD(+) + H2O = L-aspartate + NADH + 2 H(+). Dehydrogenase involved in the degradation of canavanine, the delta-oxa-analog of arginine, allowing growth on canavanine as sole nitrogen and carbon source. Probably catalyzes the NAD(+)-dependent oxidation of L-aspartate-semialdehyde to L-aspartate. This Pseudomonas canavaninivorans protein is Aspartate-semialdehyde dehydrogenase 1.